An 84-amino-acid chain; its full sequence is Short neurotoxin SNTX-1 (84 aa).

An N-terminal signal peptide occupies residues 1–21 (MKTLLLILVVVTIVCLDLVCC). Disulfide bonds link C25–C46, C39–C63, C65–C76, and C77–C82.

Belongs to the three-finger toxin family. Short-chain subfamily. Type I alpha-neurotoxin sub-subfamily. In terms of tissue distribution, expressed by the venom gland.

It is found in the secreted. Binds to muscle nicotinic acetylcholine receptor (nAChR) and inhibit acetylcholine from binding to the receptor, thereby impairing neuromuscular transmission. The polypeptide is Short neurotoxin SNTX-1 (Demansia vestigiata (Lesser black whip snake)).